The primary structure comprises 491 residues: Arginine decarboxylase (491 aa).

K227 is modified (N6-(pyridoxal phosphate)lysine).

The protein belongs to the Orn/Lys/Arg decarboxylase class-I family. Pyridoxal 5'-phosphate is required as a cofactor.

The protein resides in the cytoplasm. It catalyses the reaction L-arginine + H(+) = agmatine + CO2. Its pathway is amine and polyamine biosynthesis; agmatine biosynthesis; agmatine from L-arginine: step 1/1. In terms of biological role, catalyzes the formation of agmatine from arginine. This Halalkalibacterium halodurans (strain ATCC BAA-125 / DSM 18197 / FERM 7344 / JCM 9153 / C-125) (Bacillus halodurans) protein is Arginine decarboxylase (speA).